The primary structure comprises 865 residues: Probable alpha/beta-glucosidase ARB_02101 (865 aa).

An N-terminal signal peptide occupies residues 1 to 21; sequence MFGRTLALAAVFATTVLSAAA. N-linked (GlcNAc...) asparagine glycosylation is found at Asn-101 and Asn-299. The Nucleophile role is filled by Asp-428. Residue Glu-431 is part of the active site. N-linked (GlcNAc...) asparagine glycosylation occurs at Asn-515. The active-site Proton donor is Asp-548. Residues Asn-549, Asn-585, and Asn-748 are each glycosylated (N-linked (GlcNAc...) asparagine).

Belongs to the glycosyl hydrolase 31 family.

It is found in the secreted. The catalysed reaction is Hydrolysis of terminal, non-reducing (1-&gt;4)-linked alpha-D-glucose residues with release of alpha-D-glucose.. It catalyses the reaction Hydrolysis of terminal, non-reducing beta-D-glucosyl residues with release of beta-D-glucose.. Glucosidase involved in the degradation of cellulosic biomass. Has both alpha- and beta-glucosidase activity. The chain is Probable alpha/beta-glucosidase ARB_02101 from Arthroderma benhamiae (strain ATCC MYA-4681 / CBS 112371) (Trichophyton mentagrophytes).